The following is a 386-amino-acid chain: Succinate--CoA ligase [ADP-forming] subunit beta (386 aa).

An ATP-grasp domain is found at 9–244; it reads KQILKKYGAV…LNEEDPTEID (236 aa). Residues Lys-46, 53–55, Glu-99, Ser-102, and Glu-107 each bind ATP; that span reads GRG. Asn-199 and Asp-213 together coordinate Mg(2+). Substrate contacts are provided by residues Asn-264 and 321–323; that span reads GIM.

Belongs to the succinate/malate CoA ligase beta subunit family. In terms of assembly, heterotetramer of two alpha and two beta subunits. Requires Mg(2+) as cofactor.

The catalysed reaction is succinate + ATP + CoA = succinyl-CoA + ADP + phosphate. The enzyme catalyses GTP + succinate + CoA = succinyl-CoA + GDP + phosphate. It functions in the pathway carbohydrate metabolism; tricarboxylic acid cycle; succinate from succinyl-CoA (ligase route): step 1/1. In terms of biological role, succinyl-CoA synthetase functions in the citric acid cycle (TCA), coupling the hydrolysis of succinyl-CoA to the synthesis of either ATP or GTP and thus represents the only step of substrate-level phosphorylation in the TCA. The beta subunit provides nucleotide specificity of the enzyme and binds the substrate succinate, while the binding sites for coenzyme A and phosphate are found in the alpha subunit. The chain is Succinate--CoA ligase [ADP-forming] subunit beta from Pelagibacter ubique (strain HTCC1062).